The following is a 364-amino-acid chain: D-alanine--D-alanine ligase (364 aa).

Residues 134 to 347 (RRLACINGLK…YPDLLDELIN (214 aa)) form the ATP-grasp domain. 167–222 (ASEFGWPLFVKPCSLGSSVGIHKANNMDELNAAVADALRYDEEILVEEFIVGREIE) contacts ATP. Asp300, Glu314, and Asn316 together coordinate Mg(2+).

This sequence belongs to the D-alanine--D-alanine ligase family. Requires Mg(2+) as cofactor. Mn(2+) is required as a cofactor.

Its subcellular location is the cytoplasm. The enzyme catalyses 2 D-alanine + ATP = D-alanyl-D-alanine + ADP + phosphate + H(+). It functions in the pathway cell wall biogenesis; peptidoglycan biosynthesis. Functionally, cell wall formation. The sequence is that of D-alanine--D-alanine ligase from Legionella pneumophila (strain Lens).